The following is a 345-amino-acid chain: UPF0324 membrane protein Cgl0015/cg0018 (345 aa).

Helical transmembrane passes span 15–37 (LRTGVLQKYTPGLLLCSIAVLIA), 44–66 (FSGVSPLIVAIILGIILTNLIQL), 81–103 (LLRLGIVFLGLQLVFSDILSLGF), 105–124 (MLAVIVCIVAGGIFGTILMG), 134–156 (VLLIACGFSICGAAAVAGVEGVT), 163–185 (VVTAVALVVIFGTLMIPFIPFAT), 205–227 (EIAQVVAAGGVIGGGALGVAVVV), 261–280 (VVPLFILGFLAMVVLRSTVA), 285–307 (VIAAGGFLQTALLSAAMFGLGCG), and 320–342 (PFILAFGSTTLVTSIALAGTLLT).

Belongs to the UPF0324 family.

It localises to the cell membrane. This Corynebacterium glutamicum (strain ATCC 13032 / DSM 20300 / JCM 1318 / BCRC 11384 / CCUG 27702 / LMG 3730 / NBRC 12168 / NCIMB 10025 / NRRL B-2784 / 534) protein is UPF0324 membrane protein Cgl0015/cg0018.